The primary structure comprises 300 residues: UDP-3-O-acyl-N-acetylglucosamine deacetylase (300 aa).

His-78, His-237, and Asp-241 together coordinate Zn(2+). His-264 serves as the catalytic Proton donor.

It belongs to the LpxC family. The cofactor is Zn(2+).

It carries out the reaction a UDP-3-O-[(3R)-3-hydroxyacyl]-N-acetyl-alpha-D-glucosamine + H2O = a UDP-3-O-[(3R)-3-hydroxyacyl]-alpha-D-glucosamine + acetate. It participates in glycolipid biosynthesis; lipid IV(A) biosynthesis; lipid IV(A) from (3R)-3-hydroxytetradecanoyl-[acyl-carrier-protein] and UDP-N-acetyl-alpha-D-glucosamine: step 2/6. Catalyzes the hydrolysis of UDP-3-O-myristoyl-N-acetylglucosamine to form UDP-3-O-myristoylglucosamine and acetate, the committed step in lipid A biosynthesis. The sequence is that of UDP-3-O-acyl-N-acetylglucosamine deacetylase from Acinetobacter baumannii (strain AB307-0294).